Here is a 633-residue protein sequence, read N- to C-terminus: ATP-dependent clpX-like chaperone, mitochondrial (633 aa).

The transit peptide at 1–56 directs the protein to the mitochondrion; it reads MSSCGACTCGAAAARLLTTSLTSAQRGISCGRIHVPVLGRLGTLDTQILRRAPLRT. The segment at 65–101 is disordered; it reads ASKDGTNKDGSGDGNKKSVTEGSSKKSGSGNSGKGGN. Residues 69–83 show a composition bias toward basic and acidic residues; that stretch reads GTNKDGSGDGNKKSV. Positions 84 to 93 are enriched in low complexity; it reads TEGSSKKSGS. The ClpX-type ZB domain maps to 93–146; the sequence is SGNSGKGGNQLRCPKCGDLCTHVETFVSSTRFVKCEKCHHFFVVLSEADSKKSI. Zn(2+) is bound by residues cysteine 105, cysteine 108, cysteine 127, and cysteine 130. 294 to 301 lines the ATP pocket; the sequence is PTGSGKTL. An N6-acetyllysine modification is found at lysine 437. Residues 598-610 show a composition bias toward basic and acidic residues; sequence KEPGYIRAPSKES. The tract at residues 598-633 is disordered; it reads KEPGYIRAPSKESSEEDYDSGVEEDGWPRQADAANS. The span at 611 to 622 shows a compositional bias: acidic residues; the sequence is SEEDYDSGVEED. Serine 617 carries the phosphoserine modification.

Belongs to the ClpX chaperone family. As to quaternary structure, homohexamer that forms a ring structure; this hexamerization requires ATP binding. Component of the ClpXP complex formed by the assembly of two CLPP heptameric rings with two CLPX hexameric rings, giving rise to a symmetrical structure with two central CLPP rings flanked by a CLPX ring at either end of the complex. Interacts with TFAM.

It is found in the mitochondrion. The protein localises to the mitochondrion matrix. Its subcellular location is the mitochondrion nucleoid. It carries out the reaction ATP + H2O = ADP + phosphate + H(+). Its function is as follows. ATP-dependent chaperone that functions as an unfoldase. As part of the ClpXP protease complex, it recognizes specific protein substrates, unfolds them using energy derived from ATP hydrolysis, and then translocates them to the proteolytic subunit (CLPP) of the ClpXP complex for degradation. Thanks to its chaperone activity, it also functions in the incorporation of the pyridoxal phosphate cofactor into 5-aminolevulinate synthase, thereby activating 5-aminolevulinate (ALA) synthesis, the first step in heme biosynthesis. This chaperone is also involved in the control of mtDNA nucleoid distribution, by regulating mitochondrial transcription factor A (TFAM) activity. This Rattus norvegicus (Rat) protein is ATP-dependent clpX-like chaperone, mitochondrial.